We begin with the raw amino-acid sequence, 434 residues long: UPF0597 protein CLD_2616 (434 aa).

The protein belongs to the UPF0597 family.

This is UPF0597 protein CLD_2616 from Clostridium botulinum (strain Okra / Type B1).